The primary structure comprises 323 residues: D-alanine--D-alanine ligase (323 aa).

The ATP-grasp domain occupies 105-305 (KQQLVPRGIP…YEDLVEAIVE (201 aa)). 131–188 (PLARPYVLKPVNEGSSVGVAIVTDESNYGNPIRRDAPGPWQEFRELLAEPFIRGRELT) is an ATP binding site. Positions 256, 272, and 274 each coordinate Mg(2+).

The protein belongs to the D-alanine--D-alanine ligase family. The cofactor is Mg(2+). It depends on Mn(2+) as a cofactor.

It localises to the cytoplasm. The catalysed reaction is 2 D-alanine + ATP = D-alanyl-D-alanine + ADP + phosphate + H(+). Its pathway is cell wall biogenesis; peptidoglycan biosynthesis. In terms of biological role, cell wall formation. This Erythrobacter litoralis (strain HTCC2594) protein is D-alanine--D-alanine ligase.